The sequence spans 476 residues: MKVRVRLAPSPTGTLHLGTARTALFNWLFAKKEGGTFLLRIEDTDIERSREEYINDIYDGLQWLGINWDESPTIQSERVNEHKQIIKTLVDKGFAYKCYASEAELDEMRETQKRNGLAPKYDNRHRNLTPEQESEFIKSGRDPVIRFKISDEKLISWNDLIRGKMTWSGKDLGGDMVIARRAPANSIGDPLYNLVVVADDSAMKISHVIRGEDHLANTAKQILLYEALDLNIPVFAHTPLILNSEGKKLSKRDGVTSISEFKKMGYTSEAMANYMTLLGWSVPEGINERFNISEVSEIFSFKKVNKASAKFDWDKLNWLNSQVIHEMSAETLLENLEPLFKENGWHLPSHEWGINLVGLIGPSMVLINDGVDQAKPFFEEQELSEDGKKQLEIKEAAVILKFILEKLEDTDAASFSKEKALDLINQATKSCEVKKGLVMKSLRAALFGTLNGPDLIQSWVLLSRFSKDRARISRLI.

The 'HIGH' region motif lies at 9–19 (PSPTGTLHLGT). Residues 248–252 (KLSKR) carry the 'KMSKS' region motif. Lys251 is a binding site for ATP.

This sequence belongs to the class-I aminoacyl-tRNA synthetase family. Glutamate--tRNA ligase type 1 subfamily. As to quaternary structure, monomer.

The protein localises to the cytoplasm. The catalysed reaction is tRNA(Glu) + L-glutamate + ATP = L-glutamyl-tRNA(Glu) + AMP + diphosphate. In terms of biological role, catalyzes the attachment of glutamate to tRNA(Glu) in a two-step reaction: glutamate is first activated by ATP to form Glu-AMP and then transferred to the acceptor end of tRNA(Glu). In Prochlorococcus marinus (strain NATL2A), this protein is Glutamate--tRNA ligase.